We begin with the raw amino-acid sequence, 809 residues long: Sucrose synthase 4 (809 aa).

The interval 275–753 (MIFNVVVVSP…GLQRIYEKYT (479 aa)) is GT-B glycosyltransferase.

The protein belongs to the glycosyltransferase 1 family. Plant sucrose synthase subfamily. Predominantly expressed in the leaf tissues and in caryopses.

The enzyme catalyses an NDP-alpha-D-glucose + D-fructose = a ribonucleoside 5'-diphosphate + sucrose + H(+). Functionally, sucrose-cleaving enzyme that provides UDP-glucose and fructose for various metabolic pathways. The sequence is that of Sucrose synthase 4 (SUS4) from Oryza sativa subsp. japonica (Rice).